A 71-amino-acid polypeptide reads, in one-letter code: UPF0352 protein Asuc_0778 (71 aa).

The protein belongs to the UPF0352 family.

This Actinobacillus succinogenes (strain ATCC 55618 / DSM 22257 / CCUG 43843 / 130Z) protein is UPF0352 protein Asuc_0778.